We begin with the raw amino-acid sequence, 122 residues long: Small ribosomal subunit protein uS13 (122 aa).

A disordered region spans residues Arg-99–Lys-122.

Belongs to the universal ribosomal protein uS13 family. In terms of assembly, part of the 30S ribosomal subunit. Forms a loose heterodimer with protein S19. Forms two bridges to the 50S subunit in the 70S ribosome.

Its function is as follows. Located at the top of the head of the 30S subunit, it contacts several helices of the 16S rRNA. In the 70S ribosome it contacts the 23S rRNA (bridge B1a) and protein L5 of the 50S subunit (bridge B1b), connecting the 2 subunits; these bridges are implicated in subunit movement. Contacts the tRNAs in the A and P-sites. The polypeptide is Small ribosomal subunit protein uS13 (Rhodopseudomonas palustris (strain TIE-1)).